A 602-amino-acid chain; its full sequence is UvrABC system protein C (602 aa).

The 86-residue stretch at 15–100 folds into the GIY-YIG domain; it reads DQSGVYHYFD…IKQLKPKYNI (86 aa). The region spanning 206 to 241 is the UVR domain; it reads SKLISRLKERMEKLAENLRFEEAGELRDRIEKIKRI.

It belongs to the UvrC family. In terms of assembly, interacts with UvrB in an incision complex.

The protein resides in the cytoplasm. The UvrABC repair system catalyzes the recognition and processing of DNA lesions. UvrC both incises the 5' and 3' sides of the lesion. The N-terminal half is responsible for the 3' incision and the C-terminal half is responsible for the 5' incision. The chain is UvrABC system protein C from Wolinella succinogenes (strain ATCC 29543 / DSM 1740 / CCUG 13145 / JCM 31913 / LMG 7466 / NCTC 11488 / FDC 602W) (Vibrio succinogenes).